The primary structure comprises 249 residues: MPIFYESLSDNLRDWALRQPLFFVSSAPYRGRHINVSPKGLPDSSFAVLSPSKVAYVDSTGSGCETICHLRENGRATVMFCSFDATPRIMRLFCTGSVIEWNDPRYAGYVKRMGVKSLVGARAVIILDIFKVQISCGFGVPLLDLTVDPETNEPKPCFTNRPRLGKFAEYTINRGELPEYQMQWNSRSLDGLPGLHSAMRDKGEFIWWAHVTNWASYYHFQLDIIKTGMALMFLVMVVAQWVGYVLYQW.

21–24 (LFFV) is a substrate binding site. Residues 76-81 (ATVMFC), 91-92 (RL), arginine 105, and 163-164 (RL) each bind FMN. 215 to 217 (ASY) lines the substrate pocket. Residues 227 to 247 (TGMALMFLVMVVAQWVGYVLY) traverse the membrane as a helical segment.

This sequence belongs to the pyridoxamine 5'-phosphate oxidase family. It depends on FMN as a cofactor.

Its subcellular location is the membrane. It participates in mycotoxin biosynthesis. Its function is as follows. Pyridoxamine 5'-phosphate oxidase family protein; part of the gene cluster that mediates the biosynthesis of the secondary metabolite ustiloxin B, an antimitotic tetrapeptide. First, ustA is processed by the subtilisin-like endoprotease Kex2 that is outside the ustiloxin B gene cluster, at the C-terminal side of Arg-Lys, after transfer to Golgi apparatus through the endoplasmic reticulum (ER). Cleavage by KEX2 generates 16 peptides YAIG-I to YAIG-XVI. To process the precursor peptide further, at least two peptidases are necessary to cleave the N-terminal and C-terminal sides of the Tyr-Ala-Ile-Gly core peptide which serves as backbone for the synthesis of ustiloxin B, through cyclization and modification of the tyrosine with a non-protein coding amino acid, norvaline. One of the two peptidases must be the serine peptidase ustP; and the other pepdidase is probably ustH. Macrocyclization of the core peptide derived from ustA requires the tyrosinase ustQ, as well as the homologous oxidases ustYa and ustYb, and leads to the production of the first cyclization product N-desmethylustiloxin F. For the formation of N-desmethylustiloxin F, three oxidation steps are required, hydroxylation at the benzylic position, hydroxylation at either the aromatic ring of Tyr or beta-position of Ile, and oxidative cyclization. UstQ may catalyze the oxidation of a phenol moiety, whereas the ustYa and ustYb are most likely responsible for the remaining two-step oxidations. N-desmethylustiloxin F is then methylated by ustM to yield ustiloxin F which in turn substrate of the cytochrome P450 monooxygenase ustC which catalyzes the formation of S-deoxyustiloxin H. The flavoprotein monooxygenases ustF1 and ustF2 then participate in the modification of the side chain of S-deoxyustiloxin H, leading to the synthesis of an oxime intermediate, via ustiloxin H. Finally, carboxylative dehydration performed by the cysteine desulfurase-like protein ustD yields ustiloxin B. The chain is Pyridoxamine 5'-phosphate oxidase family protein ustO from Aspergillus flavus (strain ATCC 200026 / FGSC A1120 / IAM 13836 / NRRL 3357 / JCM 12722 / SRRC 167).